Consider the following 620-residue polypeptide: UvrABC system protein C (620 aa).

Residues 13–92 form the GIY-YIG domain; the sequence is DKPGVYIMKN…IKKYSPRYNI (80 aa). Positions 204–239 constitute a UVR domain; it reads TSIIKKLKLEMEKAAEELEFEKAAKIRDRILAIELI.

This sequence belongs to the UvrC family. In terms of assembly, interacts with UvrB in an incision complex.

The protein resides in the cytoplasm. Functionally, the UvrABC repair system catalyzes the recognition and processing of DNA lesions. UvrC both incises the 5' and 3' sides of the lesion. The N-terminal half is responsible for the 3' incision and the C-terminal half is responsible for the 5' incision. The protein is UvrABC system protein C of Clostridium perfringens (strain ATCC 13124 / DSM 756 / JCM 1290 / NCIMB 6125 / NCTC 8237 / Type A).